The primary structure comprises 60 residues: Cytotoxin 2 (60 aa).

Intrachain disulfides connect cysteine 3-cysteine 21, cysteine 14-cysteine 38, cysteine 42-cysteine 53, and cysteine 54-cysteine 59.

The protein belongs to the three-finger toxin family. Short-chain subfamily. Type IA cytotoxin sub-subfamily. Monomer in solution; Homodimer and oligomer in the presence of negatively charged lipids forming a pore with a size ranging between 20 and 30 Angstroms. In terms of tissue distribution, expressed by the venom gland.

Its subcellular location is the secreted. The protein localises to the target cell membrane. Its function is as follows. This three-finger cytotoxin is a basic protein that interacts and penetrates into the cell membrane, with the tips of all the three loops. Cytotoxins which have a Pro-30 (P-type) interacts with membrane stronger that those which have a 'Ser-28' (S-type). CTII interacts with membrane stronger than CTI. The polypeptide is Cytotoxin 2 (Naja oxiana (Central Asian cobra)).